A 190-amino-acid polypeptide reads, in one-letter code: Hypoxanthine/guanine phosphoribosyltransferase (190 aa).

This sequence belongs to the purine/pyrimidine phosphoribosyltransferase family. Archaeal HPRT subfamily. Homodimer.

The protein resides in the cytoplasm. The enzyme catalyses IMP + diphosphate = hypoxanthine + 5-phospho-alpha-D-ribose 1-diphosphate. It catalyses the reaction GMP + diphosphate = guanine + 5-phospho-alpha-D-ribose 1-diphosphate. Its pathway is purine metabolism; IMP biosynthesis via salvage pathway; IMP from hypoxanthine: step 1/1. Catalyzes a salvage reaction resulting in the formation of IMP that is energically less costly than de novo synthesis. This Methanohalobium evestigatum (strain ATCC BAA-1072 / DSM 3721 / NBRC 107634 / OCM 161 / Z-7303) protein is Hypoxanthine/guanine phosphoribosyltransferase.